A 231-amino-acid polypeptide reads, in one-letter code: NADH-ubiquinone oxidoreductase chain 4 (231 aa).

7 consecutive transmembrane segments (helical) span residues 1 to 21 (PIAGSMVLAAILLKLGGYGII), 34 to 54 (MFLPFIVLALWGAILANLTCL), 63 to 85 (IAYSSVSHMGLVAAAIIIQTPWG), 89 to 111 (AMALMIAHGFTSSALFCLANTTY), 128 to 148 (ILPMTSTWWLLANLMNIATPP), 169 to 189 (TIILLGLSMLITASYSLHMFL), and 211 to 231 (LLMTLHLIPLMMISMKPELVI).

The protein belongs to the complex I subunit 4 family.

Its subcellular location is the mitochondrion membrane. It carries out the reaction a ubiquinone + NADH + 5 H(+)(in) = a ubiquinol + NAD(+) + 4 H(+)(out). In terms of biological role, core subunit of the mitochondrial membrane respiratory chain NADH dehydrogenase (Complex I) that is believed to belong to the minimal assembly required for catalysis. Complex I functions in the transfer of electrons from NADH to the respiratory chain. The immediate electron acceptor for the enzyme is believed to be ubiquinone. The chain is NADH-ubiquinone oxidoreductase chain 4 (MT-ND4) from Porthidium ophryomegas (Slender hognose viper).